Consider the following 215-residue polypeptide: Abscisic acid receptor PYL6 (215 aa).

An START-like region spans residues 54-209 (HVVGPSQCFS…NLQSLAKLAE (156 aa)). A disulfide bond links Cys61 and Cys190. Abscisate contacts are provided by residues Lys90, 120–125 (AAFSLE), 147–153 (RLMNYKS), and Glu174. The Gate loop signature appears at 116-120 (SGLPA). Positions 146 to 148 (HRL) match the Latch loop motif.

It belongs to the PYR/PYL/RCAR abscisic acid intracellular receptor family. Monomer. Homodimer. Binds ABA on one subunit only. Interacts with HAB1, ABI1 and ABI2, and possibly with other PP2Cs. Binds to CARs protein in an ABA-independent manner, both at the plasma membrane and in the nucleus. Interacts directly with CAR1 and CAR4. Interacts with MYC2 in the nucleus. Interaction with MYC2 is increased in the presence of abscisic acid.

The protein resides in the cytoplasm. It localises to the nucleus. Its subcellular location is the cell membrane. In terms of biological role, receptor for abscisic acid (ABA) required for ABA-mediated responses such as stomatal closure and germination inhibition. Inhibits the activity of group-A protein phosphatases type 2C (PP2Cs) in an ABA-independent manner but more efficiently when activated by ABA. Can be activated by both (-)-ABA and (+)-ABA. May link ABA and jasmonate signaling pathways by modifying MYC2 transcriptional activity, and regulation of JAZ6 and JAZ8 gene expression by MYC2. This Arabidopsis thaliana (Mouse-ear cress) protein is Abscisic acid receptor PYL6 (PYL6).